A 321-amino-acid chain; its full sequence is Ornithine carbamoyltransferase (321 aa).

Residues 53 to 56 (STRT), glutamine 80, arginine 104, and 131 to 134 (HPCQ) each bind carbamoyl phosphate. L-ornithine-binding positions include asparagine 166, aspartate 230, and 234 to 235 (SM). Carbamoyl phosphate is bound by residues 270 to 271 (CL) and arginine 298.

The protein belongs to the aspartate/ornithine carbamoyltransferase superfamily. OTCase family.

Its subcellular location is the cytoplasm. The enzyme catalyses carbamoyl phosphate + L-ornithine = L-citrulline + phosphate + H(+). Its pathway is amino-acid biosynthesis; L-arginine biosynthesis; L-arginine from L-ornithine and carbamoyl phosphate: step 1/3. Its function is as follows. Reversibly catalyzes the transfer of the carbamoyl group from carbamoyl phosphate (CP) to the N(epsilon) atom of ornithine (ORN) to produce L-citrulline. The protein is Ornithine carbamoyltransferase of Bifidobacterium longum (strain NCC 2705).